The following is a 20-amino-acid chain: Octopamine receptor (20 aa).

It belongs to the G-protein coupled receptor 1 family.

It localises to the cell membrane. In terms of biological role, putative receptor for octopamine. Octopamine (OA) is a neurotransmitter, neurohormone, and neuromodulator in invertebrates. The activity of this receptor is mediated by G proteins which activate adenylyl cyclase. In Photinus pyralis (Common eastern firefly), this protein is Octopamine receptor.